A 260-amino-acid chain; its full sequence is Hemin import ATP-binding protein HmuV (260 aa).

The ABC transporter domain occupies 7-243 (IQASNISVTF…ERIEQVYGYS (237 aa)). Position 39–46 (39–46 (GPNGAGKS)) interacts with ATP.

This sequence belongs to the ABC transporter superfamily. Heme (hemin) importer (TC 3.A.1.14.5) family. In terms of assembly, the complex is composed of two ATP-binding proteins (HmuV), two transmembrane proteins (HmuU) and a solute-binding protein (HmuT).

It is found in the cell inner membrane. Its function is as follows. Part of the ABC transporter complex HmuTUV involved in hemin import. Responsible for energy coupling to the transport system. The protein is Hemin import ATP-binding protein HmuV of Vibrio anguillarum (strain ATCC 68554 / 775) (Listonella anguillarum).